We begin with the raw amino-acid sequence, 453 residues long: Homogentisate 1,2-dioxygenase (453 aa).

The segment covering 1-12 has biased composition (basic and acidic residues); that stretch reads MLEKAERQRKAA. The tract at residues 1 to 43 is disordered; that stretch reads MLEKAERQRKAAPDQQRSAGYMPGFGNDFETESLPGSLPQGQN. H306 functions as the Proton acceptor in the catalytic mechanism. The Fe cation site is built by H349 and E355. Homogentisate-binding residues include Y364 and H385. H385 is a binding site for Fe cation.

Belongs to the homogentisate dioxygenase family. As to quaternary structure, hexamer; dimer of trimers. Fe cation is required as a cofactor.

It carries out the reaction homogentisate + O2 = 4-maleylacetoacetate + H(+). It participates in amino-acid degradation; L-phenylalanine degradation; acetoacetate and fumarate from L-phenylalanine: step 4/6. Its function is as follows. Involved in the catabolism of homogentisate (2,5-dihydroxyphenylacetate or 2,5-OH-PhAc), a central intermediate in the degradation of phenylalanine and tyrosine. Catalyzes the oxidative ring cleavage of the aromatic ring of homogentisate to yield maleylacetoacetate. This chain is Homogentisate 1,2-dioxygenase, found in Sinorhizobium medicae (strain WSM419) (Ensifer medicae).